A 268-amino-acid chain; its full sequence is uncharacterized protein (268 aa).

The next 3 membrane-spanning stretches (helical) occupy residues 169–189 (AIIYVFMCLFFSLFWFYQGFA), 190–210 (GVKTSILTGTAEIGLAILWLL), and 225–245 (IFAGFACLGSEIFMWVLLSVF).

Its subcellular location is the cell membrane. This is an uncharacterized protein from Bacillus subtilis (strain 168).